The sequence spans 891 residues: Alanine--tRNA ligase (891 aa).

Residues His-564, His-568, Cys-678, and His-682 each coordinate Zn(2+).

This sequence belongs to the class-II aminoacyl-tRNA synthetase family. Requires Zn(2+) as cofactor.

It is found in the cytoplasm. The enzyme catalyses tRNA(Ala) + L-alanine + ATP = L-alanyl-tRNA(Ala) + AMP + diphosphate. In terms of biological role, catalyzes the attachment of alanine to tRNA(Ala) in a two-step reaction: alanine is first activated by ATP to form Ala-AMP and then transferred to the acceptor end of tRNA(Ala). Also edits incorrectly charged Ser-tRNA(Ala) and Gly-tRNA(Ala) via its editing domain. The sequence is that of Alanine--tRNA ligase from Nitrobacter hamburgensis (strain DSM 10229 / NCIMB 13809 / X14).